The chain runs to 365 residues: PHD finger protein 6 (365 aa).

At Ser-2 the chain carries N-acetylserine. Short sequence motifs (nuclear localization signal) lie at residues 13–16 (RQRK) and 129–133 (RKHKK). A C2HC pre-PHD-type 1 zinc finger spans residues 14–52 (QRKCGFCKSNRDKECGQLLISENQKVAAHHKCMLFSSAL). The tract at residues 14–132 (QRKCGFCKSN…IYMVYCRKHK (119 aa)) is extended PHD1 domain (ePHD1). The PHD-type 1 zinc finger occupies 80–132 (LMCSLCHCPGATIGCDVKTCHRTYHYHCALHDKAQIREKPSQGIYMVYCRKHK). Residues Ser-138, Ser-145, and Ser-155 each carry the phosphoserine modification. The tract at residues 139-211 (EADLEESFNE…RSSPSDTRPK (73 aa)) is disordered. The Nucleolar localization signal motif lies at 157-169 (KSKKKSRKGRPRK). Residues 157-171 (KSKKKSRKGRPRKTN) show a composition bias toward basic residues. Lys-173 participates in a covalent cross-link: Glycyl lysine isopeptide (Lys-Gly) (interchain with G-Cter in SUMO2). Phosphoserine occurs at positions 183 and 199. The C2HC pre-PHD-type 2 zinc finger occupies 209–249 (RPKCGFCHVGEEENQARGKLHIFNAKKAAAHYKCMLFSSGT). Residues 209–330 (RPKCGFCHVG…IYKLYCKNHS (122 aa)) are extended PHD2 domain (ePHD2). Lys-227 participates in a covalent cross-link: Glycyl lysine isopeptide (Lys-Gly) (interchain with G-Cter in SUMO2). The segment at 278–330 (MKCTLCSQPGATIGCEIKACVKTYHYHCGVQDKAKYIENMSRGIYKLYCKNHS) adopts a PHD-type 2 zinc-finger fold. Residues 330–365 (SGNDERDEEDEERESKSRGKVEIDQQQLTQQQLNGN) are disordered. A compositionally biased stretch (basic and acidic residues) spans 342 to 352 (RESKSRGKVEI). Residues 354–365 (QQQLTQQQLNGN) are compositionally biased toward low complexity. At Thr-358 the chain carries Phosphothreonine.

In terms of assembly, interacts with UBTF. Interacts with the NuRD complex component RBBP4 (via the nucleolar localization motif), the interaction mediates transcriptional repression activity.

It is found in the nucleus. The protein localises to the nucleolus. Its subcellular location is the chromosome. It localises to the centromere. The protein resides in the kinetochore. Functionally, transcriptional regulator that associates with ribosomal RNA promoters and suppresses ribosomal RNA (rRNA) transcription. The protein is PHD finger protein 6 (PHF6) of Bos taurus (Bovine).